Consider the following 587-residue polypeptide: Cryptochrome-1 (587 aa).

Residues 3–132 (VNAVHWFRKG…EVIVRISHTL (130 aa)) form the Photolyase/cryptochrome alpha/beta domain. A Glycyl lysine isopeptide (Lys-Gly) (interchain with G-Cter in ubiquitin) cross-link involves residue lysine 11. Positions 50 to 54 (NRWRF) match the LIR 1 motif. Residue serine 71 is modified to Phosphoserine; by AMPK. Residues 82 to 87 (DVFPRL) carry the LIR 2 motif. Lysine 107 participates in a covalent cross-link: Glycyl lysine isopeptide (Lys-Gly) (interchain with G-Cter in ubiquitin). Residues 151-156 (KRFQTL) carry the LIR 3 motif. Lysine 159 participates in a covalent cross-link: Glycyl lysine isopeptide (Lys-Gly) (interchain with G-Cter in ubiquitin). Serine 247 carries the post-translational modification Phosphoserine; by MAPK. Serine 252 is an FAD binding site. 2 short sequence motifs (LIR) span residues 255-260 (LRFGCL) and 271-276 (DLYKKV). A Phosphoserine; by AMPK modification is found at serine 280. The short motif at 285–290 (SLYGQL) is the LIR 6 element. Glutamine 289 serves as a coordination point for FAD. Lysine 329 participates in a covalent cross-link: Glycyl lysine isopeptide (Lys-Gly) (interchain with G-Cter in ubiquitin). The short motif at 335-339 (TGFPW) is the LIR 7 element. Residue histidine 355 participates in FAD binding. The required for inhibition of CLOCK-BMAL1-mediated transcription stretch occupies residues 371–470 (WISWEEGMKV…LIGVNYPKPM (100 aa)). The LIR 8 motif lies at 379–384 (KVFEEL). 387–389 (DAD) contributes to the FAD binding site. 3 consecutive short sequence motifs (LIR) follow at residues 395-400 (GSWMWL), 411-416 (HCYCPV), and 430-435 (RRYLPV). The interval 471–493 (VNHAEASRLNIERMKQIYQQLSR) is interaction with TIMELESS. Residue lysine 485 forms a Glycyl lysine isopeptide (Lys-Gly) (interchain with G-Cter in ubiquitin) linkage. 2 consecutive short sequence motifs (LIR) follow at residues 486-491 (QIYQQL) and 492-497 (SRYRGL). The segment at 554 to 587 (GSSSMGHGLSNGKRPSQEEDTQSIGPKVQRQSTN) is disordered. Phosphoserine is present on serine 569.

It belongs to the DNA photolyase class-1 family. In terms of assembly, component of the circadian core oscillator, which includes the CRY proteins, CLOCK or NPAS2, BMAL1 or BMAL2, CSNK1D and/or CSNK1E, TIMELESS, and the PER proteins. Interacts directly with TIMELESS. Interacts directly with PER1, PER2 and PER3; interaction with PER2 inhibits its ubiquitination and vice versa. Interacts with FBXL21. Interacts with FBXL3. Interacts with CLOCK-BMAL1 independently of PER2 and DNA. Interacts with HDAC1, HDAC2 and SIN3B. Interacts with nuclear receptors AR, NR1D1, NR3C1/GR, RORA and RORC; the interaction with at least NR3C1/GR is ligand dependent. Interacts with PRKDC. Interacts with the G protein subunit alpha GNAS; the interaction may block GPCR-mediated regulation of cAMP concentrations. Interacts with PRMT5. Interacts with EZH2. Interacts with MYBBP1A, DOCK7, HNRNPU, RPL7A, RPL8 and RPS3. Interacts with PPP5C (via TPR repeats). Interacts with MAP1LC3B. Interacts with CLOCK. Interacts with BMAL1. Interacts weakly with HDAC3; this interaction is enhanced in the presence of FBXL3. Interacts with TRIM28, KCTD5 and DDB1 Interacts with HNF4A. Interacts with PSMD2 in a KDM8-dependent manner. Interacts with KDM8 in a FBXL3-dependent manner. Interacts with PPARG in a ligand-dependent manner. Interacts with PPARD (via domain NR LBD) and NR1I2 (via domain NR LBD) in a ligand-dependent manner. Interacts with PPARA, NR1I3 and VDR. It depends on FAD as a cofactor. Requires (6R)-5,10-methylene-5,6,7,8-tetrahydrofolate as cofactor. Post-translationally, phosphorylation on Ser-247 by MAPK is important for the inhibition of CLOCK-BMAL1-mediated transcriptional activity. Phosphorylation by CSNK1E requires interaction with PER1 or PER2. Phosphorylation at Ser-71 and Ser-280 by AMPK decreases protein stability. Phosphorylation at Ser-569 exhibits a robust circadian rhythm with a peak at CT8, increases protein stability, prevents SCF(FBXL3)-mediated degradation and is antagonized by interaction with PRKDC. In terms of processing, ubiquitinated by the SCF(FBXL3) and SCF(FBXL21) complexes, regulating the balance between degradation and stabilization. The SCF(FBXL3) complex is mainly nuclear and mediates ubiquitination and subsequent degradation of CRY1. In contrast, cytoplasmic SCF(FBXL21) complex-mediated ubiquitination leads to stabilize CRY1 and counteract the activity of the SCF(FBXL3) complex. The SCF(FBXL3) and SCF(FBXL21) complexes probably mediate ubiquitination at different Lys residues. Ubiquitination at Lys-11 and Lys-107 are specifically ubiquitinated by the SCF(FBXL21) complex but not by the SCF(FBXL3) complex. Ubiquitination may be inhibited by PER2. Deubiquitinated by USP7. Undergoes autophagy-mediated degradation in the liver in a time-dependent manner. Autophagic degradation of CRY1 (an inhibitor of gluconeogenesis) occurs during periods of reduced feeding allowing induction of gluconeogenesis and maintenance of blood glucose levels. Expressed in all tissues tested including spleen, liver, skeletal muscle, kidney, brain, intestine, eye, harderian gland, liver and heart. Highest levels in the eye, brain, kidney and harderian gland. In the brain, especially located to the suprachiasma nucleus (SCN).

The protein resides in the cytoplasm. It localises to the nucleus. Functionally, transcriptional repressor which forms a core component of the circadian clock. The circadian clock, an internal time-keeping system, regulates various physiological processes through the generation of approximately 24 hour circadian rhythms in gene expression, which are translated into rhythms in metabolism and behavior. It is derived from the Latin roots 'circa' (about) and 'diem' (day) and acts as an important regulator of a wide array of physiological functions including metabolism, sleep, body temperature, blood pressure, endocrine, immune, cardiovascular, and renal function. Consists of two major components: the central clock, residing in the suprachiasmatic nucleus (SCN) of the brain, and the peripheral clocks that are present in nearly every tissue and organ system. Both the central and peripheral clocks can be reset by environmental cues, also known as Zeitgebers (German for 'timegivers'). The predominant Zeitgeber for the central clock is light, which is sensed by retina and signals directly to the SCN. The central clock entrains the peripheral clocks through neuronal and hormonal signals, body temperature and feeding-related cues, aligning all clocks with the external light/dark cycle. Circadian rhythms allow an organism to achieve temporal homeostasis with its environment at the molecular level by regulating gene expression to create a peak of protein expression once every 24 hours to control when a particular physiological process is most active with respect to the solar day. Transcription and translation of core clock components (CLOCK, NPAS2, BMAL1, BMAL2, PER1, PER2, PER3, CRY1 and CRY2) plays a critical role in rhythm generation, whereas delays imposed by post-translational modifications (PTMs) are important for determining the period (tau) of the rhythms (tau refers to the period of a rhythm and is the length, in time, of one complete cycle). A diurnal rhythm is synchronized with the day/night cycle, while the ultradian and infradian rhythms have a period shorter and longer than 24 hours, respectively. Disruptions in the circadian rhythms contribute to the pathology of cardiovascular diseases, cancer, metabolic syndromes and aging. A transcription/translation feedback loop (TTFL) forms the core of the molecular circadian clock mechanism. Transcription factors, CLOCK or NPAS2 and BMAL1 or BMAL2, form the positive limb of the feedback loop, act in the form of a heterodimer and activate the transcription of core clock genes and clock-controlled genes (involved in key metabolic processes), harboring E-box elements (5'-CACGTG-3') within their promoters. The core clock genes: PER1/2/3 and CRY1/2 which are transcriptional repressors form the negative limb of the feedback loop and interact with the CLOCK|NPAS2-BMAL1|BMAL2 heterodimer inhibiting its activity and thereby negatively regulating their own expression. This heterodimer also activates nuclear receptors NR1D1/2 and RORA/B/G, which form a second feedback loop and which activate and repress BMAL1 transcription, respectively. CRY1 and CRY2 have redundant functions but also differential and selective contributions at least in defining the pace of the SCN circadian clock and its circadian transcriptional outputs. More potent transcriptional repressor in cerebellum and liver than CRY2, though more effective in lengthening the period of the SCN oscillator. On its side, CRY2 seems to play a critical role in tuning SCN circadian period by opposing the action of CRY1. With CRY2, is dispensable for circadian rhythm generation but necessary for the development of intercellular networks for rhythm synchrony. Capable of translocating circadian clock core proteins such as PER proteins to the nucleus. Interacts with CLOCK-BMAL1 independently of PER proteins and is found at CLOCK-BMAL1-bound sites, suggesting that CRY may act as a molecular gatekeeper to maintain CLOCK-BMAL1 in a poised and repressed state until the proper time for transcriptional activation. Represses the CLOCK-BMAL1 induced transcription of BHLHE40/DEC1, ATF4, MTA1, KLF10 and NAMPT. May repress circadian target genes expression in collaboration with HDAC1 and HDAC2 through histone deacetylation. Mediates the clock-control activation of ATR and modulates ATR-mediated DNA damage checkpoint. In liver, mediates circadian regulation of cAMP signaling and gluconeogenesis by binding to membrane-coupled G proteins and blocking glucagon-mediated increases in intracellular cAMP concentrations and CREB1 phosphorylation. Inhibits hepatic gluconeogenesis by decreasing nuclear FOXO1 levels that down-regulates gluconeogenic gene expression. Besides its role in the maintenance of the circadian clock, is also involved in the regulation of other processes. Represses glucocorticoid receptor NR3C1/GR-induced transcriptional activity by binding to glucocorticoid response elements (GREs). Plays a key role in glucose and lipid metabolism modulation, in part, through the transcriptional regulation of genes involved in these pathways, such as LEP or ACSL4. Represses PPARD and its target genes in the skeletal muscle and limits exercise capacity. Plays an essential role in the generation of circadian rhythms in the retina. Represses the transcriptional activity of NR1I2. The sequence is that of Cryptochrome-1 (CRY1) from Spalax judaei (Judean Mountains blind mole rat).